Here is a 414-residue protein sequence, read N- to C-terminus: Na(+)-translocating NADH-quinone reductase subunit B (414 aa).

4 helical membrane passes run 56-76 (IMIM…YNVG), 82-104 (ALNH…HYWL), 129-149 (FLPI…LFCM), and 164-184 (ILFA…LGIT). T236 bears the FMN phosphoryl threonine mark. 5 helical membrane-spanning segments follow: residues 275–295 (VSTL…IASW), 297–317 (IIAG…VIGS), 325–345 (MPWH…FMAT), 358–378 (WAYG…NPAY), and 381–401 (GMML…HIVI).

Belongs to the NqrB/RnfD family. In terms of assembly, composed of six subunits; NqrA, NqrB, NqrC, NqrD, NqrE and NqrF. It depends on FMN as a cofactor.

It localises to the cell inner membrane. The catalysed reaction is a ubiquinone + n Na(+)(in) + NADH + H(+) = a ubiquinol + n Na(+)(out) + NAD(+). In terms of biological role, NQR complex catalyzes the reduction of ubiquinone-1 to ubiquinol by two successive reactions, coupled with the transport of Na(+) ions from the cytoplasm to the periplasm. NqrA to NqrE are probably involved in the second step, the conversion of ubisemiquinone to ubiquinol. The sequence is that of Na(+)-translocating NADH-quinone reductase subunit B from Vibrio anguillarum (Listonella anguillarum).